The following is a 479-amino-acid chain: Glycogen synthase (479 aa).

Lys-15 contacts ADP-alpha-D-glucose.

Belongs to the glycosyltransferase 1 family. Bacterial/plant glycogen synthase subfamily.

It catalyses the reaction [(1-&gt;4)-alpha-D-glucosyl](n) + ADP-alpha-D-glucose = [(1-&gt;4)-alpha-D-glucosyl](n+1) + ADP + H(+). Its pathway is glycan biosynthesis; glycogen biosynthesis. In terms of biological role, synthesizes alpha-1,4-glucan chains using ADP-glucose. In Acidiphilium cryptum (strain JF-5), this protein is Glycogen synthase.